Reading from the N-terminus, the 499-residue chain is Glutamyl-tRNA(Gln) amidotransferase subunit A (499 aa).

Active-site charge relay system residues include Lys-79 and Ser-154. Ser-178 serves as the catalytic Acyl-ester intermediate.

This sequence belongs to the amidase family. GatA subfamily. As to quaternary structure, heterotrimer of A, B and C subunits.

It carries out the reaction L-glutamyl-tRNA(Gln) + L-glutamine + ATP + H2O = L-glutaminyl-tRNA(Gln) + L-glutamate + ADP + phosphate + H(+). Its function is as follows. Allows the formation of correctly charged Gln-tRNA(Gln) through the transamidation of misacylated Glu-tRNA(Gln) in organisms which lack glutaminyl-tRNA synthetase. The reaction takes place in the presence of glutamine and ATP through an activated gamma-phospho-Glu-tRNA(Gln). In Psychrobacter sp. (strain PRwf-1), this protein is Glutamyl-tRNA(Gln) amidotransferase subunit A.